We begin with the raw amino-acid sequence, 1311 residues long: Ubiquitin carboxyl-terminal hydrolase 36 (1311 aa).

2 stretches are compositionally biased toward low complexity: residues 120–134 (AAAATNNGNSNSAGS) and 156–174 (STPTTTTTQTSSSSTSSSS). Positions 120-189 (AAAATNNGNS…NPNELPKPKR (70 aa)) are disordered. One can recognise a USP domain in the interval 212 to 533 (AGMINVGNTC…NSYIMFYELD (322 aa)). C221 functions as the Nucleophile in the catalytic mechanism. H492 acts as the Proton acceptor in catalysis. The segment at 546-575 (NGLRQLSNGHHHHQQQQQQHQQQQQQQPTV) is disordered. Positions 560–572 (QQQQQHQQQQQQQ) are enriched in low complexity. The residue at position 581 (S581) is a Phosphoserine. Disordered regions lie at residues 587 to 620 (TRFIGPQLPPGGLNGYAMTTTTTATNNTTNGHSQ), 640 to 1095 (KFQE…GCLN), and 1136 to 1311 (DHGD…QQQS). 3 stretches are compositionally biased toward low complexity: residues 605–616 (TTTTTATNNTTN), 660–716 (APAV…QQQQ), and 759–774 (TLTLTPTTTPTASTPT). At T767 the chain carries Phosphothreonine. S787 and S789 each carry phosphoserine. The segment covering 795-826 (SSGTPSSSTPTTTTTAAAAAASSPMQATAAAT) has biased composition (low complexity). A compositionally biased stretch (basic residues) spans 836 to 853 (ARKRSLPDHHHHHPHHHV). Polar residues predominate over residues 869–879 (PATNFNSSSSK). Over residues 880 to 889 (QKTDAIDEIF) the composition is skewed to basic and acidic residues. Basic residues predominate over residues 896-905 (NKKRINNKNQ). A compositionally biased stretch (acidic residues) spans 910–920 (GDEEEDDEETL). Low complexity-rich tracts occupy residues 925–942 (NNSSRLVSSSTNTSPTTN) and 950–979 (VSSSSSNSKNVSTSAAAAAATTSSSTSTSA). Over residues 980-989 (PPSPKTPPSP) the composition is skewed to pro residues. S982 carries the phosphoserine modification. At T985 the chain carries Phosphothreonine. Residue S988 is modified to Phosphoserine. A compositionally biased stretch (acidic residues) spans 1006–1020 (DDDDDEEEEDEDDEE). Over residues 1037 to 1050 (PFSSQQKPTPSPST) the composition is skewed to low complexity. S1047 is subject to Phosphoserine. T1050 is modified (phosphothreonine). Polar residues predominate over residues 1060 to 1081 (FNGTSSSTPHVGNGYQSEPSTP). 2 stretches are compositionally biased toward low complexity: residues 1154-1176 (VVTTTTTTTTTTKNTTKTLTADA) and 1204-1221 (TANGKSSGNSNNTTPGYN). Residues 1246–1255 (QHASSSYRSN) show a composition bias toward polar residues. A compositionally biased stretch (gly residues) spans 1267-1276 (GGNGGGGSGG).

Belongs to the peptidase C19 family. Interacts with atms/PAF1, but not with CycT.

It localises to the nucleus. It is found in the nucleolus. The catalysed reaction is Thiol-dependent hydrolysis of ester, thioester, amide, peptide and isopeptide bonds formed by the C-terminal Gly of ubiquitin (a 76-residue protein attached to proteins as an intracellular targeting signal).. Required for maintaining multiple types of adult stem cells, including male and female germline, epithelial follicle cell and intestinal stem cells. May function as a transcriptional repressor by continually deubiquiting histone H2B at the promoters of genes critical for cellular differentiation, thereby preventing histone H3 'Lys-4' trimethylation (H3K4). Controls selective autophagy activation by ubiquitinated proteins. In Drosophila willistoni (Fruit fly), this protein is Ubiquitin carboxyl-terminal hydrolase 36 (Usp36).